The following is a 273-amino-acid chain: Nickel permease LarQ (273 aa).

The next 5 membrane-spanning stretches (helical) occupy residues 64-84 (LIQL…ILLW), 117-137 (MLFV…FFGL), 159-179 (LAGL…AIAI), 210-230 (LIGA…LELY), and 251-271 (HWRD…FIFW).

Belongs to the CbiQ family. May form an energy-coupling factor (ECF) transporter complex composed of an ATP-binding protein (A component, LarO), a transmembrane protein (T component, LarQ) and a fused possible substrate-capture protein (S component, LarMN) of unknown stoichiometry.

The protein localises to the cell membrane. Probable transmembrane component of the energy-coupling factor (ECF) transporter complex LarMNQO involved in nickel import. The protein is Nickel permease LarQ of Lactiplantibacillus plantarum (strain ATCC BAA-793 / NCIMB 8826 / WCFS1) (Lactobacillus plantarum).